A 104-amino-acid polypeptide reads, in one-letter code: UPF0213 protein plu4503 (104 aa).

Residues 4 to 79 form the GIY-YIG domain; sequence NQWVLYLLKT…KQLSKQQKER (76 aa).

Belongs to the UPF0213 family.

The polypeptide is UPF0213 protein plu4503 (Photorhabdus laumondii subsp. laumondii (strain DSM 15139 / CIP 105565 / TT01) (Photorhabdus luminescens subsp. laumondii)).